We begin with the raw amino-acid sequence, 398 residues long: Argininosuccinate lyase (398 aa).

Belongs to the lyase 1 family. Argininosuccinate lyase subfamily.

The protein resides in the cytoplasm. It catalyses the reaction 2-(N(omega)-L-arginino)succinate = fumarate + L-arginine. The protein operates within amino-acid biosynthesis; L-arginine biosynthesis; L-arginine from L-ornithine and carbamoyl phosphate: step 3/3. The polypeptide is Argininosuccinate lyase (Thermotoga neapolitana (strain ATCC 49049 / DSM 4359 / NBRC 107923 / NS-E)).